The primary structure comprises 125 residues: Large ribosomal subunit protein bL12 (125 aa).

It belongs to the bacterial ribosomal protein bL12 family. Homodimer. Part of the ribosomal stalk of the 50S ribosomal subunit. Forms a multimeric L10(L12)X complex, where L10 forms an elongated spine to which 2 to 4 L12 dimers bind in a sequential fashion. Binds GTP-bound translation factors.

Its function is as follows. Forms part of the ribosomal stalk which helps the ribosome interact with GTP-bound translation factors. Is thus essential for accurate translation. The sequence is that of Large ribosomal subunit protein bL12 from Polaromonas sp. (strain JS666 / ATCC BAA-500).